The following is an 869-amino-acid chain: Probable beta-glucosidase F (869 aa).

An N-terminal signal peptide occupies residues 1–19 (MRVLSAIALVASLVPSALS). N-linked (GlcNAc...) asparagine glycans are attached at residues asparagine 69, asparagine 77, and asparagine 261. The active site involves aspartate 289. N-linked (GlcNAc...) asparagine glycans are attached at residues asparagine 332, asparagine 364, asparagine 399, asparagine 425, and asparagine 478. The interval 678-698 (AYPPTRPPKGPTPTYPTTIPN) is disordered. The span at 681-691 (PTRPPKGPTPT) shows a compositional bias: pro residues. Asparagine 728 carries an N-linked (GlcNAc...) asparagine glycan.

This sequence belongs to the glycosyl hydrolase 3 family.

The protein resides in the secreted. It carries out the reaction Hydrolysis of terminal, non-reducing beta-D-glucosyl residues with release of beta-D-glucose.. It participates in glycan metabolism; cellulose degradation. Beta-glucosidases are one of a number of cellulolytic enzymes involved in the degradation of cellulosic biomass. Catalyzes the last step releasing glucose from the inhibitory cellobiose. The sequence is that of Probable beta-glucosidase F (bglF) from Neosartorya fischeri (strain ATCC 1020 / DSM 3700 / CBS 544.65 / FGSC A1164 / JCM 1740 / NRRL 181 / WB 181) (Aspergillus fischerianus).